We begin with the raw amino-acid sequence, 445 residues long: Phosphoglucosamine mutase (445 aa).

The Phosphoserine intermediate role is filled by S99. Mg(2+) is bound by residues S99, D242, D244, and D246. S99 carries the phosphoserine modification.

This sequence belongs to the phosphohexose mutase family. Mg(2+) serves as cofactor. Activated by phosphorylation.

The catalysed reaction is alpha-D-glucosamine 1-phosphate = D-glucosamine 6-phosphate. In terms of biological role, catalyzes the conversion of glucosamine-6-phosphate to glucosamine-1-phosphate. The polypeptide is Phosphoglucosamine mutase (Nitratiruptor sp. (strain SB155-2)).